The sequence spans 409 residues: Argininosuccinate synthase (409 aa).

Residues 11 to 19 (AYSGGLDTS) and alanine 38 contribute to the ATP site. Tyrosine 91 and serine 96 together coordinate L-citrulline. ATP is bound at residue glycine 121. Residues threonine 123, asparagine 127, and aspartate 128 each coordinate L-aspartate. Asparagine 127 contacts L-citrulline. Residues arginine 131, serine 182, serine 191, glutamate 267, and tyrosine 279 each contribute to the L-citrulline site.

The protein belongs to the argininosuccinate synthase family. Type 1 subfamily. Homotetramer.

It is found in the cytoplasm. The catalysed reaction is L-citrulline + L-aspartate + ATP = 2-(N(omega)-L-arginino)succinate + AMP + diphosphate + H(+). The protein operates within amino-acid biosynthesis; L-arginine biosynthesis; L-arginine from L-ornithine and carbamoyl phosphate: step 2/3. In Nitrobacter winogradskyi (strain ATCC 25391 / DSM 10237 / CIP 104748 / NCIMB 11846 / Nb-255), this protein is Argininosuccinate synthase.